Reading from the N-terminus, the 49-residue chain is Delta-actitoxin-Axm1a (49 aa).

Cystine bridges form between Cys-4–Cys-46, Cys-6–Cys-36, and Cys-29–Cys-47.

It belongs to the sea anemone sodium channel inhibitory toxin family. Type I subfamily.

The protein resides in the secreted. It is found in the nematocyst. Its function is as follows. Binds specifically to voltage-gated sodium channels (Nav) (site 3), thereby delaying their inactivation. This toxin retains the greatest capacity to discriminate between the cardiac (Nav1.5/SCN5A) and neuronal sodium channels (2.5 nM versus 120 nM, when electrophysiologically tested and 14 nM versus 400 nM, when tested by ion flux), whereas its paralog Anthopleurin-B has the highest affinity of all anemone toxins for the mammalian sodium channel. Its ability to differentiate between cardiac and skeletal channels appears to be associated with domain 4 of the channel. This toxin does not slow or inhibit closed-state inactivation of cardiac sodium channels, but selectively modifies inactivation from the open-state. It does not display phospholipid-binding activities, suggesting that the domain IV S3-S4 linker is located at the extracellular surface and not buried in the phospholipid bilayer. In Anthopleura xanthogrammica (Giant green sea anemone), this protein is Delta-actitoxin-Axm1a.